Consider the following 186-residue polypeptide: Ion-translocating oxidoreductase complex subunit B (186 aa).

The interval 1–23 (MLTPILALTALALIAGALLGFAA) is hydrophobic. In terms of domain architecture, 4Fe-4S spans 29 to 88 (EGNPIADQVDAVLPQTQCGQCGFGGCRPYAEAIAAGEAEINRCPPGGQDTVQTLADLLGV). [4Fe-4S] cluster-binding residues include Cys-46, Cys-49, Cys-54, Cys-71, Cys-114, Cys-117, Cys-120, Cys-124, Cys-144, Cys-147, Cys-150, and Cys-154. 2 consecutive 4Fe-4S ferredoxin-type domains span residues 105 to 134 (QVAW…GAAK) and 135 to 164 (QMHT…MVPV).

This sequence belongs to the 4Fe4S bacterial-type ferredoxin family. RnfB subfamily. As to quaternary structure, the complex is composed of six subunits: RnfA, RnfB, RnfC, RnfD, RnfE and RnfG. [4Fe-4S] cluster is required as a cofactor.

It is found in the cell inner membrane. In terms of biological role, part of a membrane-bound complex that couples electron transfer with translocation of ions across the membrane. The polypeptide is Ion-translocating oxidoreductase complex subunit B (Alkalilimnicola ehrlichii (strain ATCC BAA-1101 / DSM 17681 / MLHE-1)).